The sequence spans 97 residues: U6-theraphotoxin-Hhn1a 3 (97 aa).

The signal sequence occupies residues 1–33 (MLIKQFSRRSKNTKVQILLAFAALFVLAVGSYA). Positions 34 to 61 (SESKKLDLRDALFSAMFSADYQLNPQER) are excised as a propeptide. Disulfide bonds link Cys-63–Cys-77, Cys-70–Cys-82, and Cys-76–Cys-89.

The protein belongs to the neurotoxin 10 (Hwtx-1) family. 12 (Hntx-12) subfamily. As to expression, expressed by the venom gland.

It localises to the secreted. Its function is as follows. Ion channel inhibitor. This is U6-theraphotoxin-Hhn1a 3 from Cyriopagopus hainanus (Chinese bird spider).